We begin with the raw amino-acid sequence, 265 residues long: tRNA (guanine-N(1)-)-methyltransferase (265 aa).

Residues G119 and 139-144 (IGDYVL) each bind S-adenosyl-L-methionine.

The protein belongs to the RNA methyltransferase TrmD family. As to quaternary structure, homodimer.

Its subcellular location is the cytoplasm. The catalysed reaction is guanosine(37) in tRNA + S-adenosyl-L-methionine = N(1)-methylguanosine(37) in tRNA + S-adenosyl-L-homocysteine + H(+). Functionally, specifically methylates guanosine-37 in various tRNAs. In Alcanivorax borkumensis (strain ATCC 700651 / DSM 11573 / NCIMB 13689 / SK2), this protein is tRNA (guanine-N(1)-)-methyltransferase.